The primary structure comprises 185 residues: Ribosome-recycling factor (185 aa).

This sequence belongs to the RRF family.

The protein resides in the cytoplasm. Functionally, responsible for the release of ribosomes from messenger RNA at the termination of protein biosynthesis. May increase the efficiency of translation by recycling ribosomes from one round of translation to another. The polypeptide is Ribosome-recycling factor (Photobacterium profundum (strain SS9)).